The chain runs to 255 residues: Zinc-finger homeodomain protein 6 (255 aa).

The segment at 1–35 (MEFRGHDEPVDEMGVAYGRTPPSSSSSPAASASAG) is disordered. The segment covering 21-35 (PPSSSSSPAASASAG) has biased composition (low complexity). A ZF-HD dimerization-type; degenerate zinc finger spans residues 45-93 (YHECLRNHAAAMGGHVVDGCREFMPMPGDAADALKCAACGCHRSFHRKD). A compositionally biased stretch (pro residues) spans 106 to 126 (PSPPTPRVPLLMPPPQPQPHP). Disordered regions lie at residues 106-181 (PSPP…KFTP) and 226-255 (NNKS…QQQQ). Low complexity predominate over residues 139 to 153 (YHHTPSGSGGTTTES). Positions 172–235 (RKRFRTKFTP…NNKSSIGSSS (64 aa)) form a DNA-binding region, homeobox. A compositionally biased stretch (low complexity) spans 240–255 (RRQPQEQQSQQQQQQQ).

Homo- and heterodimer with other ZFHD proteins.

The protein localises to the nucleus. Functionally, putative transcription factor. This chain is Zinc-finger homeodomain protein 6 (ZHD6), found in Oryza sativa subsp. japonica (Rice).